The primary structure comprises 768 residues: Cullin-3-A (768 aa).

The disordered stretch occupies residues 677-698 (VAAKQGESDPERKETRQKVDDD). Positions 682-698 (GESDPERKETRQKVDDD) are enriched in basic and acidic residues. The region spanning 698-760 (DRKHEIEAAI…REYLARTPED (63 aa)) is the Cullin neddylation domain. A Glycyl lysine isopeptide (Lys-Gly) (interchain with G-Cter in NEDD8) cross-link involves residue Lys712.

Belongs to the cullin family. As to quaternary structure, component of multiple BCR (BTB-CUL3-RBX1) E3 ubiquitin-protein ligase complexes formed of cul3, rbx1 and a variable BTB domain-containing protein acting as both, adapter to cullin and substrate recognition subunit. Interacts with btbd6. Post-translationally, neddylated. Attachment of NEDD8 is required for the E3 ubiquitin-protein ligase activity of the SCF-like complex.

The protein localises to the nucleus. The protein operates within protein modification; protein ubiquitination. Probable core component of cullin-based SCF-like E3 ubiquitin-protein ligase complexes which mediate the ubiquitination and subsequent proteasomal degradation of target proteins. The E3 ubiquitin-protein ligase activity of the complex is dependent on the neddylation of the cullin subunit. Involved in ER-Golgi transport by regulating the size of COPII coats, thereby playing a key role in collagen export, which is required for embryonic stem (ES) cells division. May play a role in the regulation of mittotic entry via ubiquitination of aurka. This is Cullin-3-A (cul3a) from Xenopus laevis (African clawed frog).